The following is a 476-amino-acid chain: mRNA cap guanine-N(7) methyltransferase (476 aa).

Residues 1 to 14 (MANSTKAEEYEKMS) show a composition bias toward basic and acidic residues. Residues 1–128 (MANSTKAEEY…TGDGTQNKRK (128 aa)) are disordered. Residues 20–50 (ASVNSEAESSFSINENTTASGTGLSGKTSVC) are compositionally biased toward polar residues. 3 positions are modified to phosphoserine: Ser-24, Ser-28, and Ser-29. 3 stretches are compositionally biased toward basic and acidic residues: residues 54–68 (DTAR…DLVK), 84–93 (LDPEIVPEEK), and 107–117 (RETEDVPKDEY). Ser-118 is modified (phosphoserine). The Nuclear localization signal signature appears at 126–128 (KRK). The mRNA cap 0 methyltransferase domain occupies 167-475 (SRIFYLRNFN…IYLVFAFEKQ (309 aa)). 176 to 177 (NN) contributes to the mRNA binding site. S-adenosyl-L-methionine-binding residues include Lys-180, Gly-205, Asp-227, Asp-261, Gln-284, and Tyr-289.

The protein belongs to the class I-like SAM-binding methyltransferase superfamily. mRNA cap 0 methyltransferase family. In terms of assembly, interacts with importin alpha, leading to stimulate both RNA-binding and methyltransferase activity. Interaction with importin alpha and beta is required for its nuclear localization, importin beta dissociating in response to RanGTP, allowing RNMT-importin alpha to bind RNA substrates. Interacts with elongating form of polymerase II and RNGTT. Interacts with RAMAC, this interaction significantly enhances RNA-binding and cap methyltransferase activity.

It localises to the nucleus. The catalysed reaction is a 5'-end (5'-triphosphoguanosine)-ribonucleoside in mRNA + S-adenosyl-L-methionine = a 5'-end (N(7)-methyl 5'-triphosphoguanosine)-ribonucleoside in mRNA + S-adenosyl-L-homocysteine. Methyltransferase activity is activated by RAMAC. Functionally, catalytic subunit of the mRNA-capping methyltransferase RNMT:RAMAC complex that methylates the N7 position of the added guanosine to the 5'-cap structure of mRNAs. Binds RNA containing 5'-terminal GpppC. The polypeptide is mRNA cap guanine-N(7) methyltransferase (RNMT) (Macaca fascicularis (Crab-eating macaque)).